We begin with the raw amino-acid sequence, 205 residues long: V-type ATP synthase subunit E (205 aa).

The protein belongs to the V-ATPase E subunit family.

In terms of biological role, produces ATP from ADP in the presence of a proton gradient across the membrane. This Treponema denticola (strain ATCC 35405 / DSM 14222 / CIP 103919 / JCM 8153 / KCTC 15104) protein is V-type ATP synthase subunit E.